The primary structure comprises 129 residues: Aspartate 1-decarboxylase (129 aa).

The active-site Schiff-base intermediate with substrate; via pyruvic acid is S25. Pyruvic acid (Ser) is present on S25. Substrate is bound at residue T57. Residue Y58 is the Proton donor of the active site. 73–75 (GAA) contacts substrate.

It belongs to the PanD family. In terms of assembly, heterooctamer of four alpha and four beta subunits. Pyruvate serves as cofactor. Is synthesized initially as an inactive proenzyme, which is activated by self-cleavage at a specific serine bond to produce a beta-subunit with a hydroxyl group at its C-terminus and an alpha-subunit with a pyruvoyl group at its N-terminus.

The protein resides in the cytoplasm. It carries out the reaction L-aspartate + H(+) = beta-alanine + CO2. The protein operates within cofactor biosynthesis; (R)-pantothenate biosynthesis; beta-alanine from L-aspartate: step 1/1. Functionally, catalyzes the pyruvoyl-dependent decarboxylation of aspartate to produce beta-alanine. This is Aspartate 1-decarboxylase from Chlorobium chlorochromatii (strain CaD3).